Reading from the N-terminus, the 268-residue chain is Tryptophan synthase alpha chain (268 aa).

Catalysis depends on proton acceptor residues Glu-49 and Asp-60.

The protein belongs to the TrpA family. As to quaternary structure, tetramer of two alpha and two beta chains.

The enzyme catalyses (1S,2R)-1-C-(indol-3-yl)glycerol 3-phosphate + L-serine = D-glyceraldehyde 3-phosphate + L-tryptophan + H2O. It participates in amino-acid biosynthesis; L-tryptophan biosynthesis; L-tryptophan from chorismate: step 5/5. The alpha subunit is responsible for the aldol cleavage of indoleglycerol phosphate to indole and glyceraldehyde 3-phosphate. The chain is Tryptophan synthase alpha chain from Escherichia coli O81 (strain ED1a).